The following is a 684-amino-acid chain: MPSCDDTASSDTDCQSQVSSTAHLHSYRSNGLVEPPSKRRLTTTNETSLSSAGATTFQIESPGSISAITTNNSTTSAGDSNNSNSFSDQHSRHPRTPNAMNSPTHTPISDIEEDPIQQLPLPSPSASPIQSDTENEHVTTPDSLQGKANLDSIENVMSNEPTTQSELVDLVTKLSGFLSEANQNHLVFKLLQKTTRPTLSTFNNLINNSLKRDILSNVPFEVTMKILSYLDYKTLLSVAQVCKKWFDIINNPDTWIKLLKRDKLITDDAVIKYELQYPDQLLREWSTLPEINSAQVLYKKRKIIVNRWMDPKFKPHRISVSGHGNKVVTCLQHDDEKVVTGVDDKCISIYSTQTGQLMKVLEGHEGGVWALKYTGNTLVTGSTDRTVRVWNMKTGQCTHIFRGHTSTIRCLDIIHPAVIGKNQDGEDIVFPEYPLLITGSRDHNIHVWKLPVVDDSQDYIETFEGEFDNPYLIAVLSGHTQSVRSISGYGNIIISGSYDSTVRVWDLLDDGHCTHVLQGHLDRVYSTAIDFHSKTCFSGSMDSNINVWNFETGELKKVLVGHASLVGLLDLVDDVLVSAAADATLRIWDAKTGELRSKLKGHGAAITCFEHDGLRVVSGSEKMLKLWNVEKGTFARDLLSDVTGGIWQVRFDYKRCVAAVQRIINEDEGETFIEILDFSQPLLQ.

The segment covering 1 to 17 (MPSCDDTASSDTDCQSQ) has biased composition (low complexity). Residues 1-146 (MPSCDDTASS…HVTTPDSLQG (146 aa)) are disordered. 2 stretches are compositionally biased toward polar residues: residues 18 to 29 (VSSTAHLHSYRS) and 42 to 63 (TTTN…ESPG). The span at 64 to 77 (SISAITTNNSTTSA) shows a compositional bias: low complexity. Composition is skewed to polar residues over residues 78 to 88 (GDSNNSNSFSD) and 98 to 107 (NAMNSPTHTP). Residues 116–131 (IQQLPLPSPSASPIQS) are compositionally biased toward low complexity. Residues 212–258 (RDILSNVPFEVTMKILSYLDYKTLLSVAQVCKKWFDIINNPDTWIKL) form the F-box domain. 7 WD repeats span residues 322-351 (GHGN…SIYS), 363-391 (GHEG…RVWN), 403-431 (GHTS…IVFP), 442-468 (DHNI…GEFD), 478-506 (GHTQ…RVWD), 519-549 (GHLD…NVWN), and 561-589 (GHAS…RIWD).

Functionally, this protein is essential for initiation of DNA replication and separation of the spindle pole bodies to form the poles of the mitotic spindle. It also plays a role in bud development, fusion of zygotic nuclei after conjugation and various aspects of sporulation. Required for HTA1-HTB1 locus transcription activation. The protein is Cell division control protein 4 (CDC4) of Candida albicans (Yeast).